We begin with the raw amino-acid sequence, 515 residues long: 2-isopropylmalate synthase (515 aa).

The 263-residue stretch at 4 to 266 (INIFDTTLRD…ETRLNLQEIK (263 aa)) folds into the Pyruvate carboxyltransferase domain. Residues Asp-13, His-201, His-203, and Asn-237 each contribute to the Mn(2+) site. The tract at residues 391–515 (QLSSLQVQYG…RAENQKVAMQ (125 aa)) is regulatory domain.

It belongs to the alpha-IPM synthase/homocitrate synthase family. LeuA type 1 subfamily. As to quaternary structure, homodimer. Mn(2+) is required as a cofactor.

Its subcellular location is the cytoplasm. The enzyme catalyses 3-methyl-2-oxobutanoate + acetyl-CoA + H2O = (2S)-2-isopropylmalate + CoA + H(+). It participates in amino-acid biosynthesis; L-leucine biosynthesis; L-leucine from 3-methyl-2-oxobutanoate: step 1/4. In terms of biological role, catalyzes the condensation of the acetyl group of acetyl-CoA with 3-methyl-2-oxobutanoate (2-ketoisovalerate) to form 3-carboxy-3-hydroxy-4-methylpentanoate (2-isopropylmalate). In Geobacillus sp. (strain WCH70), this protein is 2-isopropylmalate synthase.